The primary structure comprises 1186 residues: ATP-dependent helicase/nuclease subunit A (1186 aa).

The region spanning 2–460 (NFSKNQRAVI…IELSENYRSQ (459 aa)) is the UvrD-like helicase ATP-binding domain. Residue 23–30 (ASAGSGKT) coordinates ATP. Residues 487-771 (DVELKAANRD…SVMTIHAAKG (285 aa)) form the UvrD-like helicase C-terminal domain.

The protein belongs to the helicase family. AddA subfamily. In terms of assembly, heterodimer of AddA and AddB/RexB. Mg(2+) is required as a cofactor.

It catalyses the reaction Couples ATP hydrolysis with the unwinding of duplex DNA by translocating in the 3'-5' direction.. It carries out the reaction ATP + H2O = ADP + phosphate + H(+). Its function is as follows. The heterodimer acts as both an ATP-dependent DNA helicase and an ATP-dependent, dual-direction single-stranded exonuclease. Recognizes the chi site generating a DNA molecule suitable for the initiation of homologous recombination. The AddA nuclease domain is required for chi fragment generation; this subunit has the helicase and 3' -&gt; 5' nuclease activities. The sequence is that of ATP-dependent helicase/nuclease subunit A from Oenococcus oeni (strain ATCC BAA-331 / PSU-1).